Reading from the N-terminus, the 257-residue chain is Diphthine synthase (257 aa).

S-adenosyl-L-methionine is bound by residues leucine 9, aspartate 83, methionine 86, 111 to 112, and isoleucine 163; that span reads SI.

It belongs to the diphthine synthase family. In terms of assembly, homodimer.

It carries out the reaction 2-[(3S)-amino-3-carboxypropyl]-L-histidyl-[translation elongation factor 2] + 3 S-adenosyl-L-methionine = diphthine-[translation elongation factor 2] + 3 S-adenosyl-L-homocysteine + 3 H(+). Its pathway is protein modification; peptidyl-diphthamide biosynthesis. In terms of biological role, S-adenosyl-L-methionine-dependent methyltransferase that catalyzes the trimethylation of the amino group of the modified target histidine residue in translation elongation factor 2 (EF-2), to form an intermediate called diphthine. The three successive methylation reactions represent the second step of diphthamide biosynthesis. This Thermoplasma acidophilum (strain ATCC 25905 / DSM 1728 / JCM 9062 / NBRC 15155 / AMRC-C165) protein is Diphthine synthase.